A 233-amino-acid polypeptide reads, in one-letter code: Large ribosomal subunit protein uL1 (233 aa).

Belongs to the universal ribosomal protein uL1 family. Part of the 50S ribosomal subunit.

Its function is as follows. Binds directly to 23S rRNA. The L1 stalk is quite mobile in the ribosome, and is involved in E site tRNA release. Protein L1 is also a translational repressor protein, it controls the translation of the L11 operon by binding to its mRNA. This chain is Large ribosomal subunit protein uL1, found in Shewanella oneidensis (strain ATCC 700550 / JCM 31522 / CIP 106686 / LMG 19005 / NCIMB 14063 / MR-1).